The sequence spans 164 residues: Small ribosomal subunit protein uS5 (164 aa).

Residues 10–73 (LEERVVAINR…EAAKKNLIEV (64 aa)) form the S5 DRBM domain.

It belongs to the universal ribosomal protein uS5 family. Part of the 30S ribosomal subunit. Contacts proteins S4 and S8.

With S4 and S12 plays an important role in translational accuracy. Functionally, located at the back of the 30S subunit body where it stabilizes the conformation of the head with respect to the body. The protein is Small ribosomal subunit protein uS5 of Streptococcus thermophilus (strain CNRZ 1066).